Consider the following 1052-residue polypeptide: Mitotic checkpoint serine/threonine-protein kinase BUB1 beta (1052 aa).

The BUB1 N-terminal domain occupies 56–219 (FESEIRFYSG…LEPSEPQRSS (164 aa)). The short motif at 105-112 (GETRYYND) is the Nuclear localization signal element. The segment at 146 to 179 (AQFYISWAEEYEARENFKKADIIFQEGIERKAEP) is necessary for interaction with KNL1. 2 disordered regions span residues 206–256 (EEEA…NAVP) and 272–327 (ADTA…TSIP). The D-box signature appears at 217–225 (RSSLAELKS). The residue at position 243 (lysine 243) is an N6-acetyllysine; by PCAF. Position 360 is a phosphoserine (serine 360). Residues 361–381 (TRKPGREEGDPLQRVQSHQQG) form a disordered region. Serine 428 is modified (phosphoserine). A disordered region spans residues 496–552 (SNPREISPAENILQEQPDSKGSSMPFSIFDESLSDKKDKSPATGGPQVLNAQRRPLS). Over residues 508 to 520 (LQEQPDSKGSSMP) the composition is skewed to polar residues. Residues serine 535 and serine 659 each carry the phosphoserine modification. Serine 665 carries the phosphoserine; by PLK1 modification. A Phosphoserine modification is found at serine 686. Residues 756–1040 (VIKQEHLTCD…TISPEALLTQ (285 aa)) form the Protein kinase domain. ATP is bound at residue 762–770 (LTCDDYRLF). Residue threonine 781 is modified to Phosphothreonine; by PLK1. Lysine 784 is a binding site for ATP. The Proton acceptor role is filled by aspartate 871. Residue threonine 998 is modified to Phosphothreonine; by PLK1. Phosphoserine is present on residues serine 1033 and serine 1050.

The protein belongs to the protein kinase superfamily. Ser/Thr protein kinase family. BUB1 subfamily. In terms of assembly, interacts with CENPE. Interacts with PLK1. Part of a complex containing BUB3, CDC20 and BUB1B. Interacts with anaphase-promoting complex/cyclosome (APC/C). Interacts with KNL1. Interacts with KAT2B. Interacts with RIPK3. Interacts with the closed conformation form of MAD2L1. Interacts with CDC20. Proteolytically cleaved by caspase-3 in a cell cycle specific manner. The cleavage might be involved in the durability of the cell cycle delay. In terms of processing, acetylation at Lys-243 regulates its degradation and timing in anaphase entry. Post-translationally, ubiquitinated. Degraded by the proteasome. Ubiquitinated by UBR5, promoting disassembly of the mitotic checkpoint complex from the APC/C complex. Sumoylated with SUMO2 and SUMO3. The sumoylation mediates the association with CENPE at the kinetochore. In terms of processing, autophosphorylated in vitro. Intramolecular autophosphorylation stimulated by CENPE. Phosphorylated during mitosis and hyperphosphorylated in mitotically arrested cells. Phosphorylation at Ser-659 and Ser-1033 occurs at kinetochores upon mitotic entry with dephosphorylation at the onset of anaphase. Post-translationally, proteolytically cleaved by caspase-3 in a cell cycle specific manner. The cleavage might be involved in the durability of the cell cycle delay. Caspase-3 cleavage is associated with abrogation of the mitotic checkpoint. The major site of cleavage is at Asp-603. As to expression, highly expressed in thymus followed by spleen.

It is found in the cytoplasm. The protein localises to the nucleus. It localises to the chromosome. The protein resides in the centromere. Its subcellular location is the kinetochore. The enzyme catalyses L-seryl-[protein] + ATP = O-phospho-L-seryl-[protein] + ADP + H(+). It catalyses the reaction L-threonyl-[protein] + ATP = O-phospho-L-threonyl-[protein] + ADP + H(+). With respect to regulation, kinase activity stimulated by CENPE. Its function is as follows. Essential component of the mitotic checkpoint. Required for normal mitosis progression and tumor suppression. The mitotic checkpoint delays anaphase until all chromosomes are properly attached to the mitotic spindle. One of its checkpoint functions is to inhibit the activity of the anaphase-promoting complex/cyclosome (APC/C) by blocking the binding of CDC20 to APC/C, independently of its kinase activity. The other is to monitor kinetochore activities that depend on the kinetochore motor CENPE. Required for kinetochore localization of CENPE. Negatively regulates PLK1 activity in interphase cells and suppresses centrosome amplification. Also implicated in triggering apoptosis in polyploid cells that exit aberrantly from mitotic arrest. Essential for tumor suppression. May play a role in regulating aging and fertility. This Mus musculus (Mouse) protein is Mitotic checkpoint serine/threonine-protein kinase BUB1 beta (Bub1b).